The sequence spans 484 residues: F-box/LRR-repeat protein At3g59210 (484 aa).

The region spanning 6-54 (KDIINCLPDNLLCQILSNLSTKEAALTSLLSKRWRYLFALVPNLDFDVL) is the F-box domain. 5 LRR repeats span residues 144 to 170 (KIGP…NLDS), 172 to 197 (VFEE…SLLN), 205 to 234 (SCSV…SFDT), 303 to 334 (TLYL…TIES), and 335 to 360 (HPEL…VFQG).

In Arabidopsis thaliana (Mouse-ear cress), this protein is F-box/LRR-repeat protein At3g59210.